The primary structure comprises 563 residues: 5-aminolevulinate synthase, mitochondrial (563 aa).

A mitochondrion-targeting transit peptide spans 1–18 (MESLVRQSKKLCPYIGRT). The substrate site is built by Arg-137, Ser-251, and Lys-270. Pyridoxal 5'-phosphate contacts are provided by Ser-303, His-331, and Thr-373. Lys-376 is an active-site residue. Lys-376 carries the N6-(pyridoxal phosphate)lysine modification. Pyridoxal 5'-phosphate contacts are provided by Thr-405 and Thr-406. Residue Thr-491 participates in substrate binding.

It belongs to the class-II pyridoxal-phosphate-dependent aminotransferase family. In terms of assembly, homodimer. Pyridoxal 5'-phosphate serves as cofactor.

Its subcellular location is the mitochondrion matrix. The enzyme catalyses succinyl-CoA + glycine + H(+) = 5-aminolevulinate + CO2 + CoA. It participates in porphyrin-containing compound metabolism; protoporphyrin-IX biosynthesis; 5-aminolevulinate from glycine: step 1/1. In terms of biological role, catalyzes the synthesis of 5-aminolevulinate (ALA) from succinyl-CoA and glycine, the first and rate-limiting step in heme biosynthesis. This chain is 5-aminolevulinate synthase, mitochondrial (HEM1), found in Yarrowia lipolytica (strain CLIB 122 / E 150) (Yeast).